The chain runs to 172 residues: Lytic chitin monooxygenase (172 aa).

Residues 1–30 form the signal peptide; the sequence is MHAGRKTAVLIGAALAPVIAVSLPAASASA. Positions 31 and 106 each coordinate Cu cation. In terms of domain architecture, Chitin-binding type-4 spans 31 to 168; that stretch reads HGYISNPPSR…DNAFYACIDV (138 aa).

It depends on Cu(2+) as a cofactor.

Its subcellular location is the secreted. It carries out the reaction [(1-&gt;4)-N-acetyl-beta-D-glucosaminyl]n+m + reduced acceptor + O2 = [(1-&gt;4)-N-acetyl-beta-D-glucosaminyl]m-1-(1-&gt;4)-2-(acetylamino)-2-deoxy-D-glucono-1,5-lactone + [(1-&gt;4)-N-acetyl-beta-D-glucosaminyl]n + acceptor + H2O.. Its pathway is glycan degradation; chitin degradation. Its function is as follows. Involved in chitin degradation. Catalyzes the oxidative cleavage of glycosidic bonds in chitin via a copper-dependent mechanism, leading to oxidized chitooligomers with degrees of polymerization of 4-6. Is not active on cellulose. The polypeptide is Lytic chitin monooxygenase (Streptomyces ambofaciens (strain ATCC 23877 / 3486 / DSM 40053 / JCM 4204 / NBRC 12836 / NRRL B-2516)).